We begin with the raw amino-acid sequence, 97 residues long: Putative septation protein SpoVG (97 aa).

This sequence belongs to the SpoVG family.

Functionally, could be involved in septation. The chain is Putative septation protein SpoVG from Borreliella burgdorferi (strain ATCC 35210 / DSM 4680 / CIP 102532 / B31) (Borrelia burgdorferi).